Reading from the N-terminus, the 339-residue chain is Small ribosomal subunit protein mS27 (339 aa).

The N-terminal 37 residues, 1 to 37 (MGTITVVINEGPILLIRALHRATTNKKMFRSTVWRRF), are a transit peptide targeting the mitochondrion.

It belongs to the mitochondrion-specific ribosomal protein mS27 family. In terms of assembly, component of the mitochondrial small ribosomal subunit (mt-SSU). Mature yeast 74S mitochondrial ribosomes consist of a small (37S) and a large (54S) subunit. The 37S small subunit contains a 15S ribosomal RNA (15S mt-rRNA) and 34 different proteins. The 54S large subunit contains a 21S rRNA (21S mt-rRNA) and 46 different proteins.

It is found in the mitochondrion. Functionally, component of the mitochondrial ribosome (mitoribosome), a dedicated translation machinery responsible for the synthesis of mitochondrial genome-encoded proteins, including at least some of the essential transmembrane subunits of the mitochondrial respiratory chain. The mitoribosomes are attached to the mitochondrial inner membrane and translation products are cotranslationally integrated into the membrane. This chain is Small ribosomal subunit protein mS27 (MRP13), found in Saccharomyces cerevisiae (strain ATCC 204508 / S288c) (Baker's yeast).